The chain runs to 237 residues: Lipid A 1-diphosphate synthase (237 aa).

Residues 1-5 (MIKNL) lie on the Cytoplasmic side of the membrane. The helical transmembrane segment at 6-26 (PQIVLLNIVGLALFLSWYIPV) threads the bilayer. At 27-62 (NHGFWLPIDADIFYFFNQKLVESKAFLWLVALTNNR) the chain is on the periplasmic side. Residues 63-83 (AFDGCSLLAMGMLMLSFWLKE) traverse the membrane as a helical segment. At 84-90 (NAPGRRR) the chain is on the cytoplasmic side. Residues 91–111 (IVIIGLVMLLTAVVLNQLGQA) form a helical membrane-spanning segment. The Periplasmic segment spans residues 112–145 (LIPVKRASPTLTFTDINRVSELLSVPTKDASRDS). Lys167 is a topological domain (cytoplasmic). A helical transmembrane segment spans residues 168–188 (VAGLIALIIFVVFAFPRVMIG). Over 189–194 (AHWFTD) the chain is Periplasmic. Residues 195–215 (IIVGSMTVILIGLPWVLLTPL) form a helical membrane-spanning segment. The Cytoplasmic portion of the chain corresponds to 216-237 (SDRLITFFDKSLPGKNKHFQNK).

The protein belongs to the LpxT phosphotransferase family.

Its subcellular location is the cell inner membrane. The catalysed reaction is di-trans,octa-cis-undecaprenyl diphosphate + alpha-Kdo-(2-&gt;4)-alpha-Kdo-(2-&gt;6)-lipid A (E. coli) = (Kdo)2-lipid A 1-diphosphate + di-trans,octa-cis-undecaprenyl phosphate. It functions in the pathway bacterial outer membrane biogenesis; lipopolysaccharide biosynthesis. Inhibited by BasR. This regulation does not occur at the level of transcription, but rather following the assembly of LpxT into the inner membrane. Involved in the modification of the lipid A domain of lipopolysaccharides (LPS). Transfers a phosphate group from undecaprenyl pyrophosphate (C55-PP) to lipid A to form lipid A 1-diphosphate. Contributes to the recycling of undecaprenyl phosphate (C55-P). In vitro, has low undecaprenyl-diphosphate phosphatase activity. This is Lipid A 1-diphosphate synthase from Escherichia coli (strain K12).